The primary structure comprises 73 residues: Large ribosomal subunit protein bL31 (73 aa).

It belongs to the bacterial ribosomal protein bL31 family. Type A subfamily. Part of the 50S ribosomal subunit.

Functionally, binds the 23S rRNA. This is Large ribosomal subunit protein bL31 from Rhizobium meliloti (strain 1021) (Ensifer meliloti).